Reading from the N-terminus, the 858-residue chain is Elongation factor 2 (858 aa).

The tr-type G domain maps to 17–362; that stretch reads ANIRNMSVIA…MITIHLPSPV (346 aa). GTP is bound at residue 26 to 33; the sequence is AHVDHGKS. The residue at position 54 (Thr-54) is a Phosphothreonine. At Thr-57 the chain carries Phosphothreonine; by EEF2K. A Phosphothreonine modification is found at Thr-59. Lys-152 is subject to N6-succinyllysine. GTP is bound by residues 158-161 and 216-218; these read NKMD and SGL. N6-acetyllysine is present on Lys-235. Lys-239 bears the N6-acetyllysine; alternate mark. Lys-239 is covalently cross-linked (Glycyl lysine isopeptide (Lys-Gly) (interchain with G-Cter in SUMO1); alternate). Tyr-265 is modified (phosphotyrosine; by CSK). Lys-272 bears the N6-acetyllysine; alternate mark. Lys-272 bears the N6-succinyllysine; alternate mark. An N6-acetyllysine modification is found at Lys-275. Lys-322 is covalently cross-linked (Glycyl lysine isopeptide (Lys-Gly) (interchain with G-Cter in SUMO)). Ser-325 carries the phosphoserine modification. Position 373 is a phosphotyrosine; by CSK (Tyr-373). The residue at position 435 (Thr-435) is a Phosphothreonine. N6-acetyllysine is present on residues Lys-439 and Lys-445. Ser-502 bears the Phosphoserine mark. Lys-525 bears the N6,N6,N6-trimethyllysine; by EEF2KMT mark. Residue Lys-529 forms a Glycyl lysine isopeptide (Lys-Gly) (interchain with G-Cter in SUMO) linkage. Lys-572 is modified (N6-succinyllysine). Phosphoserine; by CDK2 is present on Ser-595. The residue at position 619 (Lys-619) is an N6-acetyllysine. His-715 is subject to Diphthamide.

It belongs to the TRAFAC class translation factor GTPase superfamily. Classic translation factor GTPase family. EF-G/EF-2 subfamily. Binds to 80S ribosomes. Actively translating ribosomes show mutually exclusive binding of eIF5a (EIF5A or EIF5A2) and EEF2/eEF2. Interacts with SERBP1; interaction sequesters EEF2/eEF2 at the A-site of the ribosome, thereby blocking the interaction sites of the mRNA-tRNA complex, promoting ribosome stabilization and hibernation. Interacts with HABP4; interaction takes place at the A-site of hibernating ribosomes and promotes ribosome stabilization. Component of the mRNA surveillance SURF complex, at least composed of ERF1, ERF3 (ERF3A or ERF3B), EEF2, UPF1/RENT1, SMG1, SMG8 and SMG9. Interacts with RBPMS2. Post-translationally, phosphorylation by EF-2 kinase completely inactivates EF-2; it requires prior phosphorylation by CDK2 at Ser-595 during mitotic prometaphase. Phosphorylation by CSK promotes SUMOylation, proteolytic cleavage, and nuclear translocation if the C-terminal fragment. In terms of processing, diphthamide is 2-[3-carboxyamido-3-(trimethyl-ammonio)propyl]histidine. ISGylated. Post-translationally, proteolytically processed at two sites following phosphorylation by CSK. In terms of processing, SUMOylated following phosphorylation by CSK, promotes proteolytic cleavage.

It localises to the cytoplasm. Its subcellular location is the nucleus. The catalysed reaction is GTP + H2O = GDP + phosphate + H(+). Its function is as follows. Catalyzes the GTP-dependent ribosomal translocation step during translation elongation. During this step, the ribosome changes from the pre-translocational (PRE) to the post-translocational (POST) state as the newly formed A-site-bound peptidyl-tRNA and P-site-bound deacylated tRNA move to the P and E sites, respectively. Catalyzes the coordinated movement of the two tRNA molecules, the mRNA and conformational changes in the ribosome. The polypeptide is Elongation factor 2 (EEF2) (Bos taurus (Bovine)).